The following is a 254-amino-acid chain: Proteasome subunit alpha type-7 (254 aa).

A glycan (O-linked (GlcNAc) serine) is linked at Ser136. Phosphotyrosine is present on Tyr159. Lys233 is subject to N6-acetyllysine.

It belongs to the peptidase T1A family. As to quaternary structure, the 26S proteasome consists of a 20S proteasome core and two 19S regulatory subunits. The 20S proteasome core is a barrel-shaped complex made of 28 subunits that are arranged in four stacked rings. The two outer rings are each formed by seven alpha subunits, and the two inner rings are formed by seven beta subunits. The proteolytic activity is exerted by three beta-subunits PSMB5, PSMB6 and PSMB7. PSMA7 interacts directly with the PSMG1-PSMG2 heterodimer which promotes 20S proteasome assembly. Interacts with HIF1A. Interacts with RAB7A. Interacts with PRKN. Interacts with ABL1 and ABL2. Interacts with EMAP2. Interacts with MAVS. Ubiquitous.

It is found in the cytoplasm. The protein resides in the nucleus. Functionally, component of the 20S core proteasome complex involved in the proteolytic degradation of most intracellular proteins. This complex plays numerous essential roles within the cell by associating with different regulatory particles. Associated with two 19S regulatory particles, forms the 26S proteasome and thus participates in the ATP-dependent degradation of ubiquitinated proteins. The 26S proteasome plays a key role in the maintenance of protein homeostasis by removing misfolded or damaged proteins that could impair cellular functions, and by removing proteins whose functions are no longer required. Associated with the PA200 or PA28, the 20S proteasome mediates ubiquitin-independent protein degradation. This type of proteolysis is required in several pathways including spermatogenesis (20S-PA200 complex) or generation of a subset of MHC class I-presented antigenic peptides (20S-PA28 complex). Inhibits the transactivation function of HIF-1A under both normoxic and hypoxia-mimicking conditions. The interaction with EMAP2 increases the proteasome-mediated HIF-1A degradation under the hypoxic conditions. Plays a role in hepatitis C virus internal ribosome entry site-mediated translation. Mediates nuclear translocation of the androgen receptor (AR) and thereby enhances androgen-mediated transactivation. Promotes MAVS degradation and thereby negatively regulates MAVS-mediated innate immune response. The sequence is that of Proteasome subunit alpha type-7 (Psma7) from Rattus norvegicus (Rat).